The primary structure comprises 164 residues: Phosphopantetheine adenylyltransferase (164 aa).

A substrate-binding site is contributed by Ser9. Residues 9-10 (SF) and His17 each bind ATP. Substrate is bound by residues Lys41, Leu73, and Lys87. ATP is bound by residues 88 to 90 (GLR), Glu98, and 123 to 129 (YSYISSS).

Belongs to the bacterial CoaD family. As to quaternary structure, homohexamer. Requires Mg(2+) as cofactor.

Its subcellular location is the cytoplasm. The enzyme catalyses (R)-4'-phosphopantetheine + ATP + H(+) = 3'-dephospho-CoA + diphosphate. Its pathway is cofactor biosynthesis; coenzyme A biosynthesis; CoA from (R)-pantothenate: step 4/5. Its function is as follows. Reversibly transfers an adenylyl group from ATP to 4'-phosphopantetheine, yielding dephospho-CoA (dPCoA) and pyrophosphate. This chain is Phosphopantetheine adenylyltransferase, found in Clostridium perfringens (strain 13 / Type A).